The chain runs to 341 residues: tRNA N6-adenosine threonylcarbamoyltransferase (341 aa).

Fe cation is bound by residues His111 and His115. Substrate contacts are provided by residues 134-138 (LVSGG), Asp167, Gly180, and Asn276. Asp304 is a Fe cation binding site.

The protein belongs to the KAE1 / TsaD family. Requires Fe(2+) as cofactor.

The protein localises to the cytoplasm. It carries out the reaction L-threonylcarbamoyladenylate + adenosine(37) in tRNA = N(6)-L-threonylcarbamoyladenosine(37) in tRNA + AMP + H(+). Functionally, required for the formation of a threonylcarbamoyl group on adenosine at position 37 (t(6)A37) in tRNAs that read codons beginning with adenine. Is involved in the transfer of the threonylcarbamoyl moiety of threonylcarbamoyl-AMP (TC-AMP) to the N6 group of A37, together with TsaE and TsaB. TsaD likely plays a direct catalytic role in this reaction. This chain is tRNA N6-adenosine threonylcarbamoyltransferase, found in Pseudomonas fluorescens (strain Pf0-1).